The sequence spans 399 residues: Paraneoplastic antigen-like protein 6A (399 aa).

This sequence belongs to the PNMA family. In terms of tissue distribution, expressed in the brain.

This is Paraneoplastic antigen-like protein 6A from Homo sapiens (Human).